A 421-amino-acid chain; its full sequence is DNA (cytosine-5)-methyltransferase 3-like (421 aa).

The segment covering 1-14 (MGSRETPSSCSKTL) has biased composition (polar residues). The tract at residues 1–39 (MGSRETPSSCSKTLETLDLETSDSSSPDADSPLEEQWLK) is disordered. One can recognise an ADD domain in the interval 75-207 (EVKVNRRSIE…LKAFHDQEGA (133 aa)). The segment at 86–116 (ICLCCGTLQVYTRHPLFEGGLCAPCKDKFLE) adopts a GATA-type; atypical zinc-finger fold. Residues 127–183 (QSYCTICCSGGTLFICESPDCTRCYCFECVDILVGPGTSERINAMACWVCFLCLPFS) form a PHD-type; atypical zinc finger.

As to quaternary structure, homodimer. Heterotetramer composed of 1 DNMT3A homodimer and 2 DNMT3L subunits (DNMT3L-DNMT3A-DNMT3A-DNMT3L). Interacts with histone H3 (via N-terminus); interaction is strongly inhibited by methylation at lysine 4 (H3K4me). Interacts with EZH2; the interaction is direct. Interacts with SPOCD1. In terms of tissue distribution, expressed in testis, thymus, ovary, and heart.

Its subcellular location is the nucleus. Functionally, catalytically inactive regulatory factor of DNA methyltransferases that can either promote or inhibit DNA methylation depending on the context. Essential for the function of DNMT3A and DNMT3B: activates DNMT3A and DNMT3B by binding to their catalytic domain. Acts by accelerating the binding of DNA and S-adenosyl-L-methionine (AdoMet) to the methyltransferases and dissociates from the complex after DNA binding to the methyltransferases. Recognizes unmethylated histone H3 lysine 4 (H3K4me0) and induces de novo DNA methylation by recruitment or activation of DNMT3. Plays a key role in embryonic stem cells and germ cells. In germ cells, required for the methylation of imprinted loci together with DNMT3A. In male germ cells, specifically required to methylate retrotransposons, preventing their mobilization. Plays a key role in embryonic stem cells (ESCs) by acting both as an positive and negative regulator of DNA methylation. While it promotes DNA methylation of housekeeping genes together with DNMT3A and DNMT3B, it also acts as an inhibitor of DNA methylation at the promoter of bivalent genes. Interacts with the EZH2 component of the PRC2/EED-EZH2 complex, preventing interaction of DNMT3A and DNMT3B with the PRC2/EED-EZH2 complex, leading to maintain low methylation levels at the promoters of bivalent genes. Promotes differentiation of ESCs into primordial germ cells by inhibiting DNA methylation at the promoter of RHOX5, thereby activating its expression. This chain is DNA (cytosine-5)-methyltransferase 3-like (Dnmt3l), found in Mus musculus (Mouse).